The sequence spans 151 residues: Conidium-specific protein (151 aa).

Positions 1–72 (MAKPHCSSRS…FSGDPDSEVE (72 aa)) are disordered. Over residues 48–60 (RKDNSADKGDTLR) the composition is skewed to basic and acidic residues.

In Emericella nidulans (strain FGSC A4 / ATCC 38163 / CBS 112.46 / NRRL 194 / M139) (Aspergillus nidulans), this protein is Conidium-specific protein (SpoC1-C1D).